Consider the following 142-residue polypeptide: Large ribosomal subunit protein uL13 (142 aa).

This sequence belongs to the universal ribosomal protein uL13 family. Part of the 50S ribosomal subunit.

In terms of biological role, this protein is one of the early assembly proteins of the 50S ribosomal subunit, although it is not seen to bind rRNA by itself. It is important during the early stages of 50S assembly. The chain is Large ribosomal subunit protein uL13 from Bordetella avium (strain 197N).